A 155-amino-acid polypeptide reads, in one-letter code: MNPVRKRRLFIVLAILAGVGAAVALALSALQQNINLFYTPSQIAAGEAPEGARIRAGGLVEKGSLQRDATSLAATFRVTDGVATVTVRYQGILPDLFREGQGIVALGRVDAGGMLQADEVLAKHDENYMPPEVSQALEKSGMLKHYENGKPGGAQ.

Residues 1–8 (MNPVRKRR) are Cytoplasmic-facing. Residues 9–29 (LFIVLAILAGVGAAVALALSA) form a helical; Signal-anchor for type II membrane protein membrane-spanning segment. The Periplasmic segment spans residues 30–155 (LQQNINLFYT…YENGKPGGAQ (126 aa)). His-124 and Tyr-128 together coordinate heme.

Belongs to the CcmE/CycJ family.

It is found in the cell inner membrane. Heme chaperone required for the biogenesis of c-type cytochromes. Transiently binds heme delivered by CcmC and transfers the heme to apo-cytochromes in a process facilitated by CcmF and CcmH. The sequence is that of Cytochrome c-type biogenesis protein CcmE from Azotobacter vinelandii (strain DJ / ATCC BAA-1303).